A 265-amino-acid chain; its full sequence is Type 1 encapsulin shell protein (265 aa).

It belongs to the encapsulin family. Family 1 subfamily. In terms of assembly, found in a complex with DyP, suggesting it is the native cargo protein. Monomers form pentamers, which assemble to form hollow shells composed of 60 subunits with several openings.

Its subcellular location is the encapsulin nanocompartment. The protein localises to the cell membrane. Its function is as follows. Shell component of a type 1 encapsulin nanocompartment. Assembles into proteinaceous shells 23-24 nm in diameter with 2-2.5 nm thick walls. Cargo protein DyP is targeted to the interior via its C-terminal extension; probably only 1 DyP hexamer is incorporated into each shell. Probably involved in protection against oxidative damage. The sequence is that of Type 1 encapsulin shell protein from Mycolicibacterium paratuberculosis (strain ATCC BAA-968 / K-10) (Mycobacterium paratuberculosis).